The primary structure comprises 195 residues: Holliday junction branch migration complex subunit RuvA (195 aa).

Positions 1-64 are domain I; the sequence is MIASIRGVIQ…EDALTLYGFS (64 aa). Positions 65 to 139 are domain II; sequence DNAQRSLFEQ…GKIDFRQLAA (75 aa). The flexible linker stretch occupies residues 139–143; the sequence is ASGST. The domain III stretch occupies residues 144 to 195; the sequence is SVSALDRELSEILVSLGYSAAEAAAAIASLPSDAPPTLEERLRLALRYFGSA.

It belongs to the RuvA family. As to quaternary structure, homotetramer. Forms an RuvA(8)-RuvB(12)-Holliday junction (HJ) complex. HJ DNA is sandwiched between 2 RuvA tetramers; dsDNA enters through RuvA and exits via RuvB. An RuvB hexamer assembles on each DNA strand where it exits the tetramer. Each RuvB hexamer is contacted by two RuvA subunits (via domain III) on 2 adjacent RuvB subunits; this complex drives branch migration. In the full resolvosome a probable DNA-RuvA(4)-RuvB(12)-RuvC(2) complex forms which resolves the HJ.

Its subcellular location is the cytoplasm. The RuvA-RuvB-RuvC complex processes Holliday junction (HJ) DNA during genetic recombination and DNA repair, while the RuvA-RuvB complex plays an important role in the rescue of blocked DNA replication forks via replication fork reversal (RFR). RuvA specifically binds to HJ cruciform DNA, conferring on it an open structure. The RuvB hexamer acts as an ATP-dependent pump, pulling dsDNA into and through the RuvAB complex. HJ branch migration allows RuvC to scan DNA until it finds its consensus sequence, where it cleaves and resolves the cruciform DNA. The protein is Holliday junction branch migration complex subunit RuvA of Chloroflexus aggregans (strain MD-66 / DSM 9485).